The chain runs to 91 residues: Probable Fe(2+)-trafficking protein (91 aa).

It belongs to the Fe(2+)-trafficking protein family. In terms of assembly, monomer.

Could be a mediator in iron transactions between iron acquisition and iron-requiring processes, such as synthesis and/or repair of Fe-S clusters in biosynthetic enzymes. This Salmonella agona (strain SL483) protein is Probable Fe(2+)-trafficking protein.